A 429-amino-acid polypeptide reads, in one-letter code: MFS-type efflux pump MSMEG_3705 (429 aa).

Helical transmembrane passes span 21-41 (AWAA…DRFL), 59-79 (AIGV…GIAV), 86-106 (GAFG…TMLG), 115-137 (LALT…HAYV), 150-170 (LAVI…GGGL), 181-201 (FVIM…VVGV), 228-248 (FLIV…LTTF), 264-284 (VGVE…LIVG), 299-319 (LWIV…AFVV), 327-347 (LFLA…IAAI), 361-381 (AMFL…VGML), and 397-417 (ALLL…WLAS).

The protein belongs to the major facilitator superfamily.

The protein localises to the cell inner membrane. In terms of biological role, probably plays a role in bacterial growth and resistance to antibiotics. The chain is MFS-type efflux pump MSMEG_3705 from Mycolicibacterium smegmatis (strain ATCC 700084 / mc(2)155) (Mycobacterium smegmatis).